The chain runs to 4540 residues: Dynein heavy chain, cytoplasmic (4540 aa).

Residues 1–1796 (MEESETQLNV…LIQMGNAQFH (1796 aa)) form a stem region. Coiled coils occupy residues 440 to 482 (EHIK…NVQQ), 698 to 722 (RVNYEKKLSQLFKEVRNLSNMKTKV), 794 to 827 (VKKFTDKVFELEQAVNGLNERIGQIESLCEAMKT), 975 to 995 (QQLIKDAYSQIGQLLEDMEQY), 1169 to 1251 (RSKK…LKMD), and 1295 to 1311 (QNKKIKDTCDEAQKQLN). 4 AAA regions span residues 1797 to 2018 (YGFE…VLNS), 2091 to 2348 (KELA…FTRI), 2457 to 2705 (EIDP…WKYA), and 2796 to 3056 (QFNE…AKRF). Residues 1835-1842 (GPAGTGKT), 2129-2136 (GPCGCGKS), 2496-2503 (GPPGSGKT), and 2834-2841 (GSSGVGKT) each bind ATP. Coiled-coil stretches lie at residues 3076–3182 (NEKK…NAKQ), 3289–3367 (QLKY…RSQA), 3653–3688 (EDEKVIQTLEKLKKEAAVIVQEMKQADTIMNEVMNT), and 3820–3851 (QQLKQLEGITQQNQTFNRLIDNLNKNEDRWLN). Positions 3076–3367 (NEKKSQLEDQ…VQEKVTRSQA (292 aa)) are stalk. The interval 3140 to 3159 (KKKEDSTRLSSDAEKKAKEM) is disordered. The tract at residues 3444 to 3673 (LSRPSDRLNW…LKKEAAVIVQ (230 aa)) is AAA 5. Residues 3908 to 4123 (ARKLINQILG…QRCSLDLIDE (216 aa)) form an AAA 6 region. Coiled-coil stretches lie at residues 4238 to 4259 (QKLITKVQNLQQEGEEEITQIE) and 4313 to 4342 (RFLDREITVASKLLKAVRQNIEELIQLAQG).

This sequence belongs to the dynein heavy chain family. Consists of at least two heavy chains and a number of intermediate and light chains.

The protein localises to the cytoplasm. It is found in the cytoskeleton. In terms of biological role, cytoplasmic dynein acts as a motor for the intracellular retrograde motility of vesicles and organelles along microtubules. Dynein has ATPase activity; the force-producing power stroke is thought to occur on release of ADP. The protein is Dynein heavy chain, cytoplasmic (DHC-8) of Paramecium tetraurelia.